Consider the following 449-residue polypeptide: ATP-dependent protease ATPase subunit HslU (449 aa).

Residues I18, 60–65 (GVGKTE), D261, E327, and R399 each bind ATP.

The protein belongs to the ClpX chaperone family. HslU subfamily. A double ring-shaped homohexamer of HslV is capped on each side by a ring-shaped HslU homohexamer. The assembly of the HslU/HslV complex is dependent on binding of ATP.

It is found in the cytoplasm. ATPase subunit of a proteasome-like degradation complex; this subunit has chaperone activity. The binding of ATP and its subsequent hydrolysis by HslU are essential for unfolding of protein substrates subsequently hydrolyzed by HslV. HslU recognizes the N-terminal part of its protein substrates and unfolds these before they are guided to HslV for hydrolysis. The polypeptide is ATP-dependent protease ATPase subunit HslU (Oleidesulfovibrio alaskensis (strain ATCC BAA-1058 / DSM 17464 / G20) (Desulfovibrio alaskensis)).